Consider the following 216-residue polypeptide: N-acetyltransferase 9-like protein (216 aa).

The N-acetyltransferase domain maps to 68-215; that stretch reads VLLNENDEAK…DHVELELMRT (148 aa).

Belongs to the acetyltransferase family. GNAT subfamily.

Its subcellular location is the cytoplasm. It localises to the nucleus. The polypeptide is N-acetyltransferase 9-like protein (Schizosaccharomyces pombe (strain 972 / ATCC 24843) (Fission yeast)).